The sequence spans 262 residues: Transcription factor Adf-1 (262 aa).

Residues 24-104 (NLIEAVKLNP…QMQFLVDSIR (81 aa)) constitute a DNA-binding region (MADF). In terms of domain architecture, BESS spans 217 to 256 (SAEDQSFGMVVTDMLNTLGVRQKAEAKVHIIKYLTDMQLL).

In terms of processing, O-glycosylated; contains N-acetylglucosamine side chains.

The protein localises to the nucleus. Its function is as follows. May play an important role not only in the regulation of Adh expression but also in the transcription of other genes. The protein is Transcription factor Adf-1 (Adf1) of Drosophila melanogaster (Fruit fly).